The chain runs to 2118 residues: Separin (2118 aa).

Ser-1121 bears the Phosphoserine mark. A compositionally biased stretch (basic residues) spans 1309–1318; that stretch reads KCSGRGRRRI. Residues 1309–1352 are disordered; the sequence is KCSGRGRRRIASVPPPLHNSSQKGLEEEGPPCTPKPPGRARQAG. Phosphoserine is present on residues Ser-1391 and Ser-1394. Residues 1408 to 1428 are disordered; it reads EEPKRRGTASRTRGQTRKGRS. Ser-1504 bears the Phosphoserine mark. The region spanning 1941-2036 is the Peptidase C50 domain; sequence PQNTFYVLNP…SAALAVHGNL (96 aa). Residue Cys-2025 is part of the active site.

In terms of assembly, interacts with PTTG1. Interacts with RAD21. In terms of processing, autocleaves. This function, which is not essential for its protease activity, is unknown. Post-translationally, phosphorylated by CDK1. There is 8 Ser/Thr phosphorylation sites. Among them, only Ser-1121 phosphorylation is the major site, which conducts to the enzyme inactivation.

The protein resides in the cytoplasm. It localises to the nucleus. The catalysed reaction is All bonds known to be hydrolyzed by this endopeptidase have arginine in P1 and an acidic residue in P4. P6 is often occupied by an acidic residue or by a hydroxy-amino-acid residue, the phosphorylation of which enhances cleavage.. With respect to regulation, regulated by at least two independent mechanisms. First, it is inactivated via its interaction with securin/PTTG1, which probably covers its active site. The association with PTTG1 is not only inhibitory, since PTTG1 is also required for activating it, the enzyme being inactive in cells in which PTTG1 is absent. PTTG1 degradation at anaphase, liberates it and triggers RAD21 cleavage. Second, phosphorylation at Ser-1121 inactivates it. The complete phosphorylation during mitosis, is removed when cells undergo anaphase. Activation of the enzyme at the metaphase-anaphase transition probably requires the removal of both securin and inhibitory phosphate. In terms of biological role, caspase-like protease, which plays a central role in the chromosome segregation by cleaving the SCC1/RAD21 subunit of the cohesin complex at the onset of anaphase. During most of the cell cycle, it is inactivated by different mechanisms. The protein is Separin (Espl1) of Mus musculus (Mouse).